Here is a 40-residue protein sequence, read N- to C-terminus: Ostricacin-3 (40 aa).

Cystine bridges form between C8-C36, C15-C30, and C20-C37.

It localises to the secreted. In terms of biological role, has antibacterial activity against the Gram-positive bacterium S.aureus 1056 MRSA (MIC=2.78 ug/ml) and the Gram-negative bacterium E.coli O157:H7 (MIC=2.41 ug/ml). Does not have antifungal activity against the yeast C.albicans 3153A. This Struthio camelus (Common ostrich) protein is Ostricacin-3.